We begin with the raw amino-acid sequence, 271 residues long: Murein DD-endopeptidase MepH (271 aa).

An N-terminal signal peptide occupies residues 1–27; sequence MARINRISITLCALLFTTLPLTPMAHA. The segment at 27–102 is disordered; that stretch reads ASKQARESSA…KHAVNKTASA (76 aa). Residues 55-64 show a composition bias toward basic residues; it reads KTQKTAKKAA. Low complexity predominate over residues 65 to 86; sequence SKSTTKSKTASSVKKSSITASK. Residues 138-265 enclose the NlpC/P60 domain; it reads QKATKVAMNK…RHYVGARRVM (128 aa). Residue Cys-169 is the Nucleophile of the active site. The active-site Proton acceptor is His-224. Gln-236 is an active-site residue.

It belongs to the peptidase C40 family.

It functions in the pathway cell wall biogenesis; cell wall polysaccharide biosynthesis. Functionally, a murein DD-endopeptidase with specificity for D-Ala-meso-diaminopimelic acid (mDAP) cross-links. Its role is probably to cleave D-Ala-mDAP cross-links to allow insertion of new glycans and thus cell wall expansion. Functionally redundant with MepM and MepH. Partially suppresses an mepS disruption mutant. The chain is Murein DD-endopeptidase MepH (mepH) from Escherichia coli (strain K12).